The following is a 926-amino-acid chain: Coatomer subunit beta'-2 (926 aa).

WD repeat units lie at residues 13 to 52 (QRSE…MAKS), 55 to 94 (VTEL…KVKV), 97 to 136 (AHSD…ACTQ), 140 to 180 (GHSH…PNFT), 183 to 224 (AHQK…CVQT), 227 to 266 (GHTH…LENT), 269 to 309 (YGLE…ASMD), 351 to 390 (TCDL…RSFG), and 461 to 501 (RIDV…SHFD). The interval 847-926 (EEESLENGDM…GTNNEGNPSA (80 aa)) is disordered. The span at 868-887 (NEQRNEDDVAEHVEEHHEEK) shows a compositional bias: basic and acidic residues. Positions 888-900 (EAEEEEGIVDGDS) are enriched in acidic residues. Residues 917–926 (GTNNEGNPSA) are compositionally biased toward polar residues.

This sequence belongs to the WD repeat COPB2 family. In terms of assembly, oligomeric complex that consists of at least the alpha, beta, beta', gamma, delta, epsilon and zeta subunits.

The protein localises to the cytoplasm. It localises to the golgi apparatus membrane. The protein resides in the cytoplasmic vesicle. Its subcellular location is the COPI-coated vesicle membrane. In terms of biological role, the coatomer is a cytosolic protein complex that binds to dilysine motifs and reversibly associates with Golgi non-clathrin-coated vesicles, which further mediate biosynthetic protein transport from the ER, via the Golgi up to the trans Golgi network. Coatomer complex is required for budding from Golgi membranes, and is essential for the retrograde Golgi-to-ER transport of dilysine-tagged proteins. The chain is Coatomer subunit beta'-2 from Arabidopsis thaliana (Mouse-ear cress).